Consider the following 549-residue polypeptide: Chaperonin GroEL 3 (549 aa).

ATP contacts are provided by residues 29-32, 86-90, Gly-414, 477-479, and Asp-493; these read TLGP, DGTTT, and NAA.

This sequence belongs to the chaperonin (HSP60) family. Forms a cylinder of 14 subunits composed of two heptameric rings stacked back-to-back. Interacts with the co-chaperonin GroES.

The protein resides in the cytoplasm. It catalyses the reaction ATP + H2O + a folded polypeptide = ADP + phosphate + an unfolded polypeptide.. Functionally, together with its co-chaperonin GroES, plays an essential role in assisting protein folding. The GroEL-GroES system forms a nano-cage that allows encapsulation of the non-native substrate proteins and provides a physical environment optimized to promote and accelerate protein folding. The polypeptide is Chaperonin GroEL 3 (Frankia casuarinae (strain DSM 45818 / CECT 9043 / HFP020203 / CcI3)).